The chain runs to 677 residues: AP-2 complex subunit beta (677 aa).

The segment at 597 to 677 (RLRTRDSNPS…PMTPETHLMD (81 aa)) is disordered. A compositionally biased stretch (basic residues) spans 616 to 627 (KKYNHFHQKSQT). Polar residues predominate over residues 636–654 (RNSWNPSPFSDESNSNTFS).

This sequence belongs to the adaptor complexes large subunit family. In terms of assembly, adaptor protein complex 2 (AP-2) is a heterotetramer composed of two large adaptins (alpha-type subunit apl3 and beta-type subunit apl1), a medium chain (mu-type subunit apm4) and a small adaptin (sigma-type subunit aps2).

The protein localises to the cell membrane. Its subcellular location is the membrane. It is found in the coated pit. In terms of biological role, adaptins are components of the adaptor complexes which link clathrin to receptors in coated vesicles. Clathrin-associated protein complexes are believed to interact with the cytoplasmic tails of membrane proteins, leading to their selection and concentration. Beta adaptin is a subunit of the plasma membrane adaptor. This chain is AP-2 complex subunit beta (apl1), found in Schizosaccharomyces pombe (strain 972 / ATCC 24843) (Fission yeast).